Here is a 67-residue protein sequence, read N- to C-terminus: Large ribosomal subunit protein bL35 (67 aa).

The protein belongs to the bacterial ribosomal protein bL35 family.

This is Large ribosomal subunit protein bL35 from Mesorhizobium japonicum (strain LMG 29417 / CECT 9101 / MAFF 303099) (Mesorhizobium loti (strain MAFF 303099)).